Consider the following 510-residue polypeptide: Inositol-3-phosphate synthase (510 aa).

24 residues coordinate NAD(+): glycine 70, glycine 71, asparagine 72, asparagine 73, aspartate 143, isoleucine 180, glutamine 190, arginine 193, threonine 230, alanine 231, asparagine 232, threonine 233, glycine 281, serine 282, aspartate 306, serine 309, asparagine 340, asparagine 341, aspartate 342, lysine 355, glycine 393, aspartate 394, aspartate 422, and serine 423.

This sequence belongs to the myo-inositol 1-phosphate synthase family. NAD(+) serves as cofactor.

Its subcellular location is the cytoplasm. The protein localises to the cytosol. The protein resides in the nucleus. The enzyme catalyses D-glucose 6-phosphate = 1D-myo-inositol 3-phosphate. The protein operates within polyol metabolism; myo-inositol biosynthesis; myo-inositol from D-glucose 6-phosphate: step 1/2. In terms of biological role, key enzyme in myo-inositol biosynthesis pathway that catalyzes the conversion of glucose 6-phosphate to 1-myo-inositol 1-phosphate in a NAD-dependent manner. The protein is Inositol-3-phosphate synthase of Zea mays (Maize).